The sequence spans 541 residues: Protein yellow (541 aa).

Positions 1 to 21 (MFQDKGWILVTLITLVTPSWA) are cleaved as a signal peptide. Asparagine 144 and asparagine 215 each carry an N-linked (GlcNAc...) asparagine glycan. Residues 443 to 463 (QKPQTSWASSPPPPSRTYLPA) form a disordered region.

Belongs to the major royal jelly protein family.

It localises to the secreted. In terms of biological role, controls the pigmentation pattern of the adult cuticle and larval mouth parts. In Drosophila melanogaster (Fruit fly), this protein is Protein yellow (y).